Here is a 343-residue protein sequence, read N- to C-terminus: MAASGKLSTWRLPPLPTIREIIKLLRVQAAKQLSQNFLLDLRLTDKIVRKAGNLTNAYVYEVGPGPGGITRSILNADVAELLVVEKDTRFVPGLQMLSDAAPGKLRIVHGDVLTFKVEKAFSESLKRPWEDDPPDVHIIGNLPFSVSTPLIIKWLENISCRDGPFVYGRTQMTLTFQKEVAERLAANTGSKQRSRLSVMAQYLCNVRHIFTIPGRAFVPKPEVDVGVVHFTPLIQPKIEQPFKLVEKVVQNVFQFRRKYCHRGLRMLFPEAQRLESTGRLLELADVDPTLRPCQPSISHFKSLCDVYRKMCDEDPQLFAYNFREELKQRKSKNEEKEEDDAEN.

The transit peptide at M1–V27 directs the protein to the mitochondrion. S-adenosyl-L-methionine is bound by residues L38, G63, E85, K86, D111, V112, and N141.

This sequence belongs to the class I-like SAM-binding methyltransferase superfamily. rRNA adenine N(6)-methyltransferase family. KsgA subfamily. In terms of assembly, interacts with mitochondrial RNA polymerase POLRMT. Interacts with TFAM. Bound to the maturing mtSSU until the late stages of assembly.

The protein localises to the mitochondrion. The catalysed reaction is adenosine(N)/adenosine(N+1) in rRNA + 4 S-adenosyl-L-methionine = N(6)-dimethyladenosine(N)/N(6)-dimethyladenosine(N+1) in rRNA + 4 S-adenosyl-L-homocysteine + 4 H(+). S-adenosyl-L-methionine-dependent methyltransferase which specifically dimethylates mitochondrial 12S rRNA at the conserved stem loop. Also required for basal transcription of mitochondrial DNA, probably via its interaction with POLRMT and TFAM. Stimulates transcription independently of the methyltransferase activity. Its function is as follows. Mitochondrial methyltransferase which uses S-adenosyl methionine to dimethylate two highly conserved adjacent adenosine residues (A1583 and A1584) within the loop of helix 45 at the 3-prime end of 12S rRNA, thereby regulating the assembly or stability of the small subunit of the mitochondrial ribosome. Also required for basal transcription of mitochondrial DNA, probably via its interaction with POLRMT and TFAM. Stimulates transcription independently of the methyltransferase activity. The chain is Dimethyladenosine transferase 1, mitochondrial (TFB1M) from Pongo abelii (Sumatran orangutan).